The chain runs to 682 residues: Potassium-transporting ATPase ATP-binding subunit (682 aa).

Transmembrane regions (helical) follow at residues 34-54, 62-82, 219-239, and 254-274; these read PVMF…IAMA, ALFS…ANFA, IALT…TATL, and VLVA…LSAI. The active-site 4-aspartylphosphate intermediate is Asp-307. Residues Asp-344, Glu-348, 377–384, and Lys-395 each bind ATP; that span reads FTAQSRMS. The Mg(2+) site is built by Asp-518 and Asp-522. 3 helical membrane-spanning segments follow: residues 588–608, 616–636, and 656–676; these read FAII…LNIM, AILS…PLAL, and IYGL…DLLL.

Belongs to the cation transport ATPase (P-type) (TC 3.A.3) family. Type IA subfamily. In terms of assembly, the system is composed of three essential subunits: KdpA, KdpB and KdpC.

The protein localises to the cell inner membrane. The catalysed reaction is K(+)(out) + ATP + H2O = K(+)(in) + ADP + phosphate + H(+). Its function is as follows. Part of the high-affinity ATP-driven potassium transport (or Kdp) system, which catalyzes the hydrolysis of ATP coupled with the electrogenic transport of potassium into the cytoplasm. This subunit is responsible for energy coupling to the transport system and for the release of the potassium ions to the cytoplasm. This chain is Potassium-transporting ATPase ATP-binding subunit, found in Shigella boydii serotype 4 (strain Sb227).